Reading from the N-terminus, the 663-residue chain is DNA ligase (663 aa).

NAD(+)-binding positions include 31-35 (DFEYD), 80-81 (SL), and Glu110. Lys112 (N6-AMP-lysine intermediate) is an active-site residue. NAD(+) is bound by residues Arg133, Glu168, Lys284, and Lys308. The Zn(2+) site is built by Cys402, Cys405, Cys420, and Cys425. A BRCT domain is found at 586-663 (IKDNRFEGKT…DEDKFRKMIE (78 aa)).

This sequence belongs to the NAD-dependent DNA ligase family. LigA subfamily. The cofactor is Mg(2+). Mn(2+) is required as a cofactor.

It carries out the reaction NAD(+) + (deoxyribonucleotide)n-3'-hydroxyl + 5'-phospho-(deoxyribonucleotide)m = (deoxyribonucleotide)n+m + AMP + beta-nicotinamide D-nucleotide.. Its function is as follows. DNA ligase that catalyzes the formation of phosphodiester linkages between 5'-phosphoryl and 3'-hydroxyl groups in double-stranded DNA using NAD as a coenzyme and as the energy source for the reaction. It is essential for DNA replication and repair of damaged DNA. The chain is DNA ligase from Acetivibrio thermocellus (strain ATCC 27405 / DSM 1237 / JCM 9322 / NBRC 103400 / NCIMB 10682 / NRRL B-4536 / VPI 7372) (Clostridium thermocellum).